The sequence spans 270 residues: MLTDLPLDLESEILSRVPATSLQRLKTTCKRWYALFRDPRFVKKNLGKAATHVIFDNRSGYSMTDINSLIHSINLRGIQNSFDPSIGVDVKLNVLKDPRHDKISHIISHCDGLLLCKTEDYGRLVVWNPCTGQIKWIQANNMLMDVYVLGYVNNNKSCNSYKILNFGILPLNSSHDNKSKIYEFNSDSWRILDHVSPGYFAISKAMTLKGNAYWFASDWSGTKTRTRIYFAKEGIQVHQEIAQKPKKCGPFLVSYVPSLVQIQSGNKQSS.

The F-box domain maps to 1-45; that stretch reads MLTDLPLDLESEILSRVPATSLQRLKTTCKRWYALFRDPRFVKKN.

The protein is Putative F-box protein At3g24700 of Arabidopsis thaliana (Mouse-ear cress).